The sequence spans 378 residues: MNKPLRIKHPILSITNSALVDLPAPSNISAWWNFGSLLFLCLMIQILTGLFLAMHYTADISLAFNSVNHICRDVNYGWLLRTMHANGASFFFICIYLHVGRGIYYGSYLFTPTWLVGVIILFLVMGTAFMGYVLPWGQMSFWGATVITNLLSAIPYLGIDLVQWVWGGFAVDNATLTRFFTFHFILPFIVLAATLIHILFLHETGSNNPIGVNSNIDKIPFHPYFTFKDIVGFIMMTMILILLVLINPYLLGDPDNFIPANPLVTPVHIQPEWYFLFAYAILRSIPNKLGGVIALVLSIAILAILPFYHLSKFRGIQFYPINQILFWIMVVTVILLTWIGARPVEEPYVLVGQILTVIYFSYFMFNPLIIKWWDNLLN.

4 helical membrane-spanning segments follow: residues F34–M54, W78–V99, W114–L134, and F179–L199. Positions 84 and 98 each coordinate heme b. Heme b is bound by residues H183 and H197. An a ubiquinone-binding site is contributed by H202. A run of 4 helical transmembrane segments spans residues F227–N247, L289–H309, I321–A341, and Y348–L368.

It belongs to the cytochrome b family. In terms of assembly, the main subunits of complex b-c1 are: cytochrome b, cytochrome c1 and the Rieske protein. Heme b serves as cofactor.

It is found in the mitochondrion inner membrane. In terms of biological role, component of the ubiquinol-cytochrome c reductase complex (complex III or cytochrome b-c1 complex) that is part of the mitochondrial respiratory chain. The b-c1 complex mediates electron transfer from ubiquinol to cytochrome c. Contributes to the generation of a proton gradient across the mitochondrial membrane that is then used for ATP synthesis. The polypeptide is Cytochrome b (MT-CYB) (Cochliomyia hominivorax (Primary screw-worm)).